A 37-amino-acid chain; its full sequence is Large ribosomal subunit protein bL36c (37 aa).

This sequence belongs to the bacterial ribosomal protein bL36 family.

The protein localises to the plastid. It is found in the chloroplast. The protein is Large ribosomal subunit protein bL36c of Jasminum nudiflorum (Winter jasmine).